A 430-amino-acid chain; its full sequence is 2-deoxy-scyllo-inosose synthase (430 aa).

NAD(+) contacts are provided by residues D42, E73–K76, G105–N109, T129–T130, S140–K142, and K151–N152. The active site involves K142. E184 contributes to the Co(2+) binding site. Residue E244 is part of the active site. H247 and H263 together coordinate Co(2+). Residues R371 to P430 form a disordered region. A compositionally biased stretch (low complexity) spans A379–A399.

It belongs to the sugar phosphate cyclases superfamily. DOI synthase family. NAD(+) is required as a cofactor. The cofactor is Co(2+).

It carries out the reaction D-glucose 6-phosphate = 2-deoxy-L-scyllo-inosose + phosphate. It functions in the pathway metabolic intermediate biosynthesis; 2-deoxystreptamine biosynthesis; 2-deoxystreptamine from D-glucose 6-phosphate: step 1/4. It participates in antibiotic biosynthesis; neomycin biosynthesis. Functionally, catalyzes the intramolecular carbocycle formation from D-glucose-6-phosphate to 2-deoxy-scyllo-inosose (DOI). This is 2-deoxy-scyllo-inosose synthase (neoC) from Streptomyces fradiae (Streptomyces roseoflavus).